Reading from the N-terminus, the 480-residue chain is Protein nucleotidyltransferase YdiU (480 aa).

G86, G88, R89, K109, D121, G122, R172, and R179 together coordinate ATP. The active-site Proton acceptor is the D248. 2 residues coordinate Mg(2+): N249 and D258. D258 contacts ATP.

The protein belongs to the SELO family. Mg(2+) is required as a cofactor. Mn(2+) serves as cofactor.

The catalysed reaction is L-seryl-[protein] + ATP = 3-O-(5'-adenylyl)-L-seryl-[protein] + diphosphate. It carries out the reaction L-threonyl-[protein] + ATP = 3-O-(5'-adenylyl)-L-threonyl-[protein] + diphosphate. The enzyme catalyses L-tyrosyl-[protein] + ATP = O-(5'-adenylyl)-L-tyrosyl-[protein] + diphosphate. It catalyses the reaction L-histidyl-[protein] + UTP = N(tele)-(5'-uridylyl)-L-histidyl-[protein] + diphosphate. The catalysed reaction is L-seryl-[protein] + UTP = O-(5'-uridylyl)-L-seryl-[protein] + diphosphate. It carries out the reaction L-tyrosyl-[protein] + UTP = O-(5'-uridylyl)-L-tyrosyl-[protein] + diphosphate. In terms of biological role, nucleotidyltransferase involved in the post-translational modification of proteins. It can catalyze the addition of adenosine monophosphate (AMP) or uridine monophosphate (UMP) to a protein, resulting in modifications known as AMPylation and UMPylation. This Salmonella paratyphi B (strain ATCC BAA-1250 / SPB7) protein is Protein nucleotidyltransferase YdiU.